The primary structure comprises 378 residues: MEPVIIGALILDVHAKPSTTPISGTTVPGQVLFAPGGVARNVADCIFKLGITPFMIGTLGLDGPANVLLKEWKLSMKGILRREDISTPIVSLVYDTNGEVAAGVAGVDAVENFLTPEWIQRFEYNISSARLLMVDANLSSLALEASCKLAAESSVPVWFEPVSVTKSQRIASIAKYVTIVSPNQDELIAMANALCAKNLFHPFRSDENKLSIEDMFRALKPAILVLLKNGVKVVIVTLGSNGALLCSKGNPKKALNIDRKFLRSGEVFKRVQSVCSPNRFSELGSNRSPSLFAMHFPTIPAKVKKLTGAGDCLVGGTVASLSDGLDLIQSLAVGIASAKAAVESDDNVPPEFKLDLISGDAELVYNGAKMLMVHQSML.

Pseudouridine is bound by residues D12, T26, 37-41 (GVARN), V38, N137, and K166. 2 residues coordinate Mg(2+): S181 and T237. T237, G239, G242, T298, L306, and G310 together coordinate ATP. D311 is a binding site for pseudouridine.

The protein belongs to the carbohydrate kinase PfkB family. As to quaternary structure, forms homodimers.

Its subcellular location is the peroxisome. The catalysed reaction is pseudouridine + ATP = psi-UMP + ADP + H(+). Its function is as follows. Catalyzes the phosphorylation of pseudouridine to pseudouridine 5'-phosphate (PsiMP). Catalyzes the first step in a pseudouridine degradation pathway. Acts together with the pseudouridine 5'-phosphate glycosidase PUMY in the peroxisome to prevent toxic pseudouridine monophosphate accumulation. The protein is Pseudouridine kinase of Arabidopsis thaliana (Mouse-ear cress).